The primary structure comprises 400 residues: Argininosuccinate synthase (400 aa).

ATP contacts are provided by residues 9–17 and Ala37; that span reads AYSGGVDTS. Tyr88 contributes to the L-citrulline binding site. Gly118 is an ATP binding site. Residues Thr120, Asn124, and Asp125 each coordinate L-aspartate. Asn124 lines the L-citrulline pocket. L-citrulline contacts are provided by Arg128, Ser176, Ser185, Glu261, and Tyr273.

Belongs to the argininosuccinate synthase family. Type 1 subfamily. As to quaternary structure, homotetramer.

Its subcellular location is the cytoplasm. The catalysed reaction is L-citrulline + L-aspartate + ATP = 2-(N(omega)-L-arginino)succinate + AMP + diphosphate + H(+). It participates in amino-acid biosynthesis; L-arginine biosynthesis; L-arginine from L-ornithine and carbamoyl phosphate: step 2/3. The chain is Argininosuccinate synthase from Prochlorococcus marinus (strain MIT 9211).